The chain runs to 167 residues: Small ribosomal subunit protein uS7c (167 aa).

Belongs to the universal ribosomal protein uS7 family. Part of the 30S ribosomal subunit.

It localises to the plastid. The protein localises to the chloroplast. Functionally, one of the primary rRNA binding proteins, it binds directly to 16S rRNA where it nucleates assembly of the head domain of the 30S subunit. In Tetradesmus obliquus (Green alga), this protein is Small ribosomal subunit protein uS7c (rps7).